The chain runs to 178 residues: Alkyl hydroperoxide reductase AhpD (178 aa).

Cys130 serves as the catalytic Proton donor. A disulfide bond links Cys130 and Cys133. Cys133 (cysteine sulfenic acid (-SOH) intermediate) is an active-site residue.

The protein belongs to the AhpD family. As to quaternary structure, homotrimer.

It carries out the reaction N(6)-[(R)-dihydrolipoyl]-L-lysyl-[lipoyl-carrier protein] + a hydroperoxide = N(6)-[(R)-lipoyl]-L-lysyl-[lipoyl-carrier protein] + an alcohol + H2O. Antioxidant protein with alkyl hydroperoxidase activity. Required for the reduction of the AhpC active site cysteine residues and for the regeneration of the AhpC enzyme activity. The sequence is that of Alkyl hydroperoxide reductase AhpD from Mycolicibacterium paratuberculosis (strain ATCC BAA-968 / K-10) (Mycobacterium paratuberculosis).